Reading from the N-terminus, the 102-residue chain is Ferredoxin-thioredoxin reductase, catalytic chain (102 aa).

C53 is a [4Fe-4S] cluster binding site. Catalysis depends on C55, which acts as the Nucleophile. A disulfide bond links C55 and C85. Residues C72, C74, and C83 each contribute to the [4Fe-4S] cluster site.

This sequence belongs to the ferredoxin thioredoxin reductase beta subunit family. Heterodimer of subunit A (variable subunit) and subunit B (catalytic subunit). Heterodimeric FTR forms a complex with ferredoxin and thioredoxin. Requires [4Fe-4S] cluster as cofactor.

The protein localises to the plastid. The protein resides in the chloroplast. It carries out the reaction [thioredoxin]-disulfide + 2 reduced [2Fe-2S]-[ferredoxin] + 2 H(+) = [thioredoxin]-dithiol + 2 oxidized [2Fe-2S]-[ferredoxin]. Functionally, catalytic subunit of the ferredoxin-thioredoxin reductase (FTR), which catalyzes the two-electron reduction of thioredoxins by the electrons provided by reduced ferredoxin. This Guillardia theta (Cryptophyte) protein is Ferredoxin-thioredoxin reductase, catalytic chain (ftrB).